A 494-amino-acid chain; its full sequence is Glycosyl hydrolase family 109 protein (494 aa).

Residues 1 to 32 are disordered; the sequence is MNDDARPAPEPQDIPPHSGAADEVNRQDPSRR. The tat-type signal signal peptide spans 1-58; sequence MNDDARPAPEPQDIPPHSGAADEVNRQDPSRRSVLWTTAGVAGAGLGLGALGAGTASA. Residues 104-105, Asp-126, 175-178, 195-196, and Asn-224 contribute to the NAD(+) site; these read NR, WELH, and EC. Substrate is bound by residues Tyr-253, Arg-272, 284–287, and Tyr-366; that span reads YPNH. Residue Tyr-284 coordinates NAD(+).

This sequence belongs to the Gfo/Idh/MocA family. Glycosyl hydrolase 109 subfamily. NAD(+) is required as a cofactor. Predicted to be exported by the Tat system. The position of the signal peptide cleavage has not been experimentally proven.

In terms of biological role, glycosidase. This chain is Glycosyl hydrolase family 109 protein, found in Streptomyces filamentosus (Streptomyces roseosporus).